The primary structure comprises 1151 residues: Error-prone DNA polymerase (1151 aa).

Residues 1108-1151 (HPVPSGDALIEPLNDDRRDHADAPAQKIRHPRNVRILPPSRDFH) form a disordered region.

The protein belongs to the DNA polymerase type-C family. DnaE2 subfamily.

It is found in the cytoplasm. The enzyme catalyses DNA(n) + a 2'-deoxyribonucleoside 5'-triphosphate = DNA(n+1) + diphosphate. DNA polymerase involved in damage-induced mutagenesis and translesion synthesis (TLS). It is not the major replicative DNA polymerase. The chain is Error-prone DNA polymerase from Bradyrhizobium diazoefficiens (strain JCM 10833 / BCRC 13528 / IAM 13628 / NBRC 14792 / USDA 110).